We begin with the raw amino-acid sequence, 555 residues long: Glypican-6 (555 aa).

The signal sequence occupies residues 1 to 23 (MPSWIRAVILPLSGLLLTLPAAA). The span at 348–357 (PALRSARSAP) shows a compositional bias: low complexity. Disordered regions lie at residues 348–376 (PALR…PTTA) and 480–501 (GNDV…GSGC). A lipid anchor (GPI-anchor amidated serine) is attached at serine 530. Residues 531–555 (ASKFSSSLISWSLVCMVLALQRLYR) constitute a propeptide, removed in mature form.

The protein belongs to the glypican family. In terms of tissue distribution, in the cartilage growth-plate, gradient of expression with highest levels from the proliferative and pre-hypertrophic zones to lowest, if any, in the hypertrophic zones (at protein level).

It localises to the cell membrane. The protein resides in the secreted. The protein localises to the extracellular space. Functionally, cell surface proteoglycan that bears heparan sulfate. Putative cell surface coreceptor for growth factors, extracellular matrix proteins, proteases and anti-proteases. Enhances migration and invasion of cancer cells through WNT5A signaling. The polypeptide is Glypican-6 (Gpc6) (Mus musculus (Mouse)).